A 204-amino-acid polypeptide reads, in one-letter code: Arginine exporter protein ArgO (204 aa).

6 helical membrane passes run Met1–Pro21, Leu37–Gly57, Leu67–Ala87, Ile111–Val131, Thr154–Leu174, and Val179–Ala199.

The protein belongs to the LysE/ArgO transporter (TC 2.A.75) family.

The protein localises to the cell inner membrane. The enzyme catalyses L-arginine(in) = L-arginine(out). In terms of biological role, involved in the export of arginine. Important to control the intracellular level of arginine and the correct balance between arginine and lysine. This is Arginine exporter protein ArgO from Pectobacterium atrosepticum (strain SCRI 1043 / ATCC BAA-672) (Erwinia carotovora subsp. atroseptica).